The following is a 413-amino-acid chain: MQKRVVVLLLDSFGIGASEDAKDFGDLGANTLGNIAKACFNNLADSNDRNGALKLPNLESLGLGLSALKATNELPLGFDSHPNLIGAYAYAQELSSAKDTISGHWEMMGAPILFEWGYFKDKNNSFPKEILDEIMHKTKIKGYLGNCHASGTEIIKDLGEKHLETLYPIFYTSADSVFQIAVHEEKFGLDKLYALCEEVFEILEPLKIARVIARSFIGTNKDNFKRTSNRKDYAIKPHKKLLFETFIEEKQGEVISIGKIADIYAHVGITQKFKAGSLMELCDVTLEQVKNAQNNSLIFTNFVHFDSDYGHRRDVIGYANALEYFDAYLKEILESLRENDLLILCADHGCDPSFKGTDHTREYIPVLMYHKDLQPTFLGRSETFADIGQSIAHFLGLSPLDYGKNLLNFKGQP.

Positions 11, 306, 311, 347, 348, and 359 each coordinate Mn(2+).

It belongs to the phosphopentomutase family. The cofactor is Mn(2+).

Its subcellular location is the cytoplasm. The catalysed reaction is 2-deoxy-alpha-D-ribose 1-phosphate = 2-deoxy-D-ribose 5-phosphate. It carries out the reaction alpha-D-ribose 1-phosphate = D-ribose 5-phosphate. Its pathway is carbohydrate degradation; 2-deoxy-D-ribose 1-phosphate degradation; D-glyceraldehyde 3-phosphate and acetaldehyde from 2-deoxy-alpha-D-ribose 1-phosphate: step 1/2. Its function is as follows. Isomerase that catalyzes the conversion of deoxy-ribose 1-phosphate (dRib-1-P) and ribose 1-phosphate (Rib-1-P) to deoxy-ribose 5-phosphate (dRib-5-P) and ribose 5-phosphate (Rib-5-P), respectively. The sequence is that of Phosphopentomutase from Helicobacter acinonychis (strain Sheeba).